Here is a 554-residue protein sequence, read N- to C-terminus: Serine/threonine-protein kinase ROP18 (554 aa).

A helical transmembrane segment spans residues 17–40 (GLATLLPKTACLAGLNVALVFLLF). Residues 252 to 531 (LVRGAPLGSG…PLQALETAAF (280 aa)) enclose the Protein kinase domain. Residues glycine 262, alanine 264, and lysine 281 each coordinate ATP. Asparagine 306 is a glycosylation site (N-linked (GlcNAc...) asparagine). ATP-binding residues include methionine 357, alanine 359, and aspartate 362. The N-linked (GlcNAc...) asparagine glycan is linked to asparagine 377. The Proton acceptor role is filled by aspartate 409. An ATP-binding site is contributed by aspartate 427. Mg(2+) is bound at residue aspartate 427. A glycan (N-linked (GlcNAc...) asparagine) is linked at asparagine 434. Cysteines 478 and 497 form a disulfide.

This sequence belongs to the protein kinase superfamily. Ser/Thr protein kinase family. Component of a complex at least composed of ROP18, GRA7 and ROP2. Component of a complex at least composed of ROP18 and ROP5. Interacts with GRA7 in the absence of ROP5. Interacts with mouse IRGB6 (TGTP1/TGTP2).

It localises to the parasitophorous vacuole membrane. The protein resides in the cytoplasmic vesicle. The protein localises to the secretory vesicle. It is found in the rhoptry. The enzyme catalyses L-threonyl-[protein] + ATP = O-phospho-L-threonyl-[protein] + ADP + H(+). The catalysed reaction is L-seryl-[protein] + ATP = O-phospho-L-seryl-[protein] + ADP + H(+). With respect to regulation, kinase activity is enhanced by polymorphic pseudokinase ROP5. Protein kinase. Virulence factor. Mediates parasite survival in mouse macrophages and monocytes. Reduces the accumulation of mouse IRGA6 (IIGP1) and IRGB6 (TGTP1/TGTP2), immunity-related GTPases (IRGs) that protect mice from infection by certain intracellular pathogens, on the parasitophorous vacuole and IRG-mediated killing of parasites by mouse cells; probably in connection with ROP5. In complex with GRA7, targets IRGs to prevent IRG-mediated parasite killing by mouse cells. Phosphorylates mouse IRGA6 (IIGP1); its activity toward mouse IRGA6 is promoted by GRA7 or ROP5. Phosphorylates mouse IRGB6 (TGTP1/TGTP2). Phosphorylates mouse IRGB10 (GM12250). Does not affect IFN-gamma (IFNG)-mediated parasite killing in human cells that do not possess the large variety of IRGs. This Toxoplasma gondii protein is Serine/threonine-protein kinase ROP18.